We begin with the raw amino-acid sequence, 274 residues long: Bis(5'-nucleosyl)-tetraphosphatase, symmetrical (274 aa).

The protein belongs to the Ap4A hydrolase family.

It catalyses the reaction P(1),P(4)-bis(5'-adenosyl) tetraphosphate + H2O = 2 ADP + 2 H(+). Its function is as follows. Hydrolyzes diadenosine 5',5'''-P1,P4-tetraphosphate to yield ADP. The polypeptide is Bis(5'-nucleosyl)-tetraphosphatase, symmetrical (Shewanella baltica (strain OS223)).